Reading from the N-terminus, the 377-residue chain is PqqA peptide cyclase (377 aa).

Residues 12–228 (FGIPLAVLLE…EAARERLKGQ (217 aa)) form the Radical SAM core domain. Positions 26, 30, and 33 each coordinate [4Fe-4S] cluster.

It belongs to the radical SAM superfamily. PqqE family. Interacts with PqqD. The interaction is necessary for activity of PqqE. It depends on [4Fe-4S] cluster as a cofactor.

It carries out the reaction [PQQ precursor protein] + S-adenosyl-L-methionine = E-Y cross-linked-[PQQ precursor protein] + 5'-deoxyadenosine + L-methionine + H(+). Its pathway is cofactor biosynthesis; pyrroloquinoline quinone biosynthesis. In terms of biological role, catalyzes the cross-linking of a glutamate residue and a tyrosine residue in the PqqA protein as part of the biosynthesis of pyrroloquinoline quinone (PQQ). The polypeptide is PqqA peptide cyclase (Rhodopseudomonas palustris (strain ATCC BAA-98 / CGA009)).